The sequence spans 923 residues: Mitochondrial 10-formyltetrahydrofolate dehydrogenase (923 aa).

The N-terminal 19 residues, 1–19 (MLWRGSQALRHFSTSRVYF), are a transit peptide targeting the mitochondrion; not cleaved. Residues 23–331 (LKLALIGQSL…PASQYFSAGE (309 aa)) form a hydrolase domain region. Residue S31 is modified to Phosphoserine. Position 60 is an N6-succinyllysine (K60). 110-112 (QFI) is a binding site for (6R)-10-formyltetrahydrofolate. The active-site Proton donor is H128. (6R)-10-formyltetrahydrofolate is bound at residue D164. Residues 339 to 416 (AEELKVAETI…DFIQKVVRRL (78 aa)) form the Carrier domain. Position 375 is an O-(pantetheine 4'-phosphoryl)serine (S375). Residues 438 to 923 (TVKIPYQCFI…LKIKTVTLEY (486 aa)) are aldehyde dehydrogenase domain. NADP(+) contacts are provided by residues 592–594 (IPW) and 618–621 (KPAQ). S650 bears the Phosphoserine mark. NADP(+)-binding positions include 651–656 (GGVAGQ) and 671–672 (GS). N6-succinyllysine is present on K681. E694 (proton acceptor) is an active-site residue. 694–695 (EL) serves as a coordination point for NADP(+). Catalysis depends on C728, which acts as the Proton donor. NADP(+)-binding positions include K778 and 825-827 (ESF). K903 bears the N6-acetyllysine mark.

This sequence in the N-terminal section; belongs to the GART family. The protein in the C-terminal section; belongs to the aldehyde dehydrogenase family. ALDH1L subfamily. Post-translationally, phosphopantetheinylation at Ser-375 by AASDHPPT is required for the formyltetrahydrofolate dehydrogenase activity.

It localises to the mitochondrion. It catalyses the reaction (6R)-10-formyltetrahydrofolate + NADP(+) + H2O = (6S)-5,6,7,8-tetrahydrofolate + CO2 + NADPH + H(+). Mitochondrial 10-formyltetrahydrofolate dehydrogenase that catalyzes the NADP(+)-dependent conversion of 10-formyltetrahydrofolate to tetrahydrofolate and carbon dioxide. The sequence is that of Mitochondrial 10-formyltetrahydrofolate dehydrogenase from Mus musculus (Mouse).